The primary structure comprises 311 residues: MTKIIFMGTPDFSTTVLEMLIAEHDVIAVVTQPDRPVGRKRVMTPPPVKKVAMKYDLPVYQPEKLSGSEELEQLLQLDVDLIVTAAFGQLLPESLLALPKLGAINVHASLLPKYRGGAPIHQAIIDGEQETGITIMYMVKKLDAGNIISQQAIKIEENDNVGTMHDKLSVLGADLLKETLPSIIEGTNESVPQDDTQATFASNIRREDERINWNKPGRQVFNQIRGLSPWPVAYTTMDDTNLKIYDAELVETNKINEPGTIIETTKKAIIVATNDNEAVAIKDMQLAGKKRMLAANYLSGAQNTLVGKKLI.

109–112 contributes to the (6S)-5,6,7,8-tetrahydrofolate binding site; sequence SLLP.

This sequence belongs to the Fmt family.

The enzyme catalyses L-methionyl-tRNA(fMet) + (6R)-10-formyltetrahydrofolate = N-formyl-L-methionyl-tRNA(fMet) + (6S)-5,6,7,8-tetrahydrofolate + H(+). Attaches a formyl group to the free amino group of methionyl-tRNA(fMet). The formyl group appears to play a dual role in the initiator identity of N-formylmethionyl-tRNA by promoting its recognition by IF2 and preventing the misappropriation of this tRNA by the elongation apparatus. The polypeptide is Methionyl-tRNA formyltransferase (Staphylococcus aureus (strain MW2)).